The primary structure comprises 848 residues: ATP-dependent Clp protease ATP-binding subunit ClpC1 (848 aa).

Residues 2 to 144 (FERFTDRARK…RQQVIQLLSG (143 aa)) enclose the Clp R domain. Repeat stretches follow at residues 5–70 (FTDR…IGQG) and 80–144 (FTPR…LLSG). Residues 171–418 (LDQFGRNLTA…RMRIRRMTAP (248 aa)) form an i region. Position 216–223 (216–223 (GEPGVGKT)) interacts with ATP. Residues 425–460 (DEKIAEARREKESAIDAQDFEKAASLRDREKTLVAQ) form the UVR domain. Residues 479–670 (VDDEQIAEVL…VLIFTSNLGT (192 aa)) form an II region. 553–560 (GPSGVGKT) is a binding site for ATP. A disordered region spans residues 821 to 848 (TGTRKPPAEPDLAKAGAHSAGGPEPAAR).

It belongs to the ClpA/ClpB family. ClpC subfamily.

Its function is as follows. ATP-dependent specificity component of the Clp protease. It directs the protease to specific substrates. Can perform chaperone functions in the absence of ClpP. This Mycobacterium tuberculosis (strain CDC 1551 / Oshkosh) protein is ATP-dependent Clp protease ATP-binding subunit ClpC1 (clpC1).